The primary structure comprises 138 residues: Translation initiation factor 5A (138 aa).

Residue Lys-37 is modified to Hypusine.

This sequence belongs to the eIF-5A family.

The protein resides in the cytoplasm. In terms of biological role, functions by promoting the formation of the first peptide bond. The polypeptide is Translation initiation factor 5A (eIF5A) (Thermococcus sibiricus (strain DSM 12597 / MM 739)).